A 729-amino-acid polypeptide reads, in one-letter code: ATP-dependent RNA helicase DHX15 homolog (729 aa).

The disordered stretch occupies residues 1–25 (MSKRRIEVGETYGSKAKKDPEASSS). The Helicase ATP-binding domain occupies 82–246 (MRLLSLHQCI…FDNAPLMKVP (165 aa)). 95 to 102 (GETGSGKT) is an ATP binding site. The short motif at 193 to 196 (DEAH) is the DEAH box element. In terms of domain architecture, Helicase C-terminal spans 271-451 (TVIQIHMCEE…TVVLQLKKLG (181 aa)).

It belongs to the DEAD box helicase family. DEAH subfamily. DDX15/PRP43 sub-subfamily.

It catalyses the reaction ATP + H2O = ADP + phosphate + H(+). RNA helicase involved in mRNA processing and antiviral innate immunity. Acts as an activator of the p38 MAPK cascade. In Drosophila melanogaster (Fruit fly), this protein is ATP-dependent RNA helicase DHX15 homolog.